A 423-amino-acid chain; its full sequence is Voltage-dependent calcium channel gamma-8 subunit (423 aa).

Helical transmembrane passes span 19 to 39, 127 to 147, 157 to 177, and 207 to 227; these read VQVLLTTIGAFSAFGLMTIAI, SSIFPILSAILLLLGGVCVAA, IILGAGILFVAAGLSNIIGVI, and FGGLSFILAEVIGVLAVNIYI. Phosphoserine is present on residues serine 251 and serine 254. The interval 271 to 304 is disordered; it reads RRSRSSSRGSSEASPSRDASPGGPGGPGFASTDI. Residues 276–287 show a composition bias toward low complexity; the sequence is SSRGSSEASPSR. The chain crosses the membrane as a helical span at residues 318-338; the sequence is VAAGLASAGGGGSGAGVGAYG. Disordered regions lie at residues 342-363 and 378-423; these read GAAGGGGAGSERDRGSSAGFLT and VTVT…TTPV. A compositionally biased stretch (pro residues) spans 384–399; sequence PAAPAPAPAPPAPAAP. A compositionally biased stretch (polar residues) spans 410 to 423; sequence ASNTNTLNRKTTPV.

Belongs to the PMP-22/EMP/MP20 family. CACNG subfamily. As to quaternary structure, interacts with CACNA1C. Identified in a complex with the L-type calcium channel subunits CACNA1C, CACNA2D1 and either CACNB1 or CACNB2. Acts as an auxiliary subunit for AMPA-selective glutamate receptors (AMPARs). Found in a complex with GRIA1, GRIA2, GRIA3, GRIA4, CNIH2, CNIH3, CACNG2, CACNG3, CACNG4, CACNG5 and CACNG7. Interacts with CNIH2. Found in a complex with GRIA1, GRIA2, GRIA3, GRIA4, DLG4 and CNIH2. Post-translationally, palmitoylated. Probably palmitoylated by ZDHHC3 and ZDHHC7.

The protein localises to the cell membrane. Its subcellular location is the postsynaptic density membrane. Functionally, regulates the activity of L-type calcium channels that contain CACNA1C as pore-forming subunit. Regulates the trafficking and gating properties of AMPA-selective glutamate receptors (AMPARs). Promotes their targeting to the cell membrane and synapses and modulates their gating properties by slowing their rates of activation, deactivation and desensitization and by mediating their resensitization. Does not show subunit-specific AMPA receptor regulation and regulates all AMPAR subunits. Thought to stabilize the calcium channel in an inactivated (closed) state. The sequence is that of Voltage-dependent calcium channel gamma-8 subunit from Mus musculus (Mouse).